The following is a 448-amino-acid chain: MANVVENLGKLERRVTISLPKDAVQKEVDSRIRQLAKNVRMPGFRPGKVPLKMVTQQYSGQVEAEVLSDKVGKEFFDISRAENLRVAGQPSFAPKTDATEGDYAFDATFEVYPEVKLGDVATAEIERTTTTISEAEIDRTLDILRKQRVHFHARGEAGEHGDGGGDTAAKEGDRVTVDFVGKIEGEVFQGGSADDFAFVLGEGRMLPEFEKAATGLKVGESKEFDLAFPEDYHGKEVAGKTAQFTITMKKIEWPHLPEIDAEFAKSLGIEDGDLTKMRAEIKDNLEREAKRRTQAIVKNQVMDALLKISELDVPNALIEQDQERLVAMARQDLEQRGVPNAKDAPIPAAMFKEQAERRVKLGLVLAELVKANELQAKPEQIRAEVDEFAKSYEDPKEVVRWYYSNQQRLAEMEAYVVEANVVEFVLSKAKVTDKEVSFEELASATAQA.

A PPIase FKBP-type domain is found at 172-257 (GDRVTVDFVG…MKKIEWPHLP (86 aa)).

The protein belongs to the FKBP-type PPIase family. Tig subfamily.

Its subcellular location is the cytoplasm. It catalyses the reaction [protein]-peptidylproline (omega=180) = [protein]-peptidylproline (omega=0). Functionally, involved in protein export. Acts as a chaperone by maintaining the newly synthesized protein in an open conformation. Functions as a peptidyl-prolyl cis-trans isomerase. The protein is Trigger factor of Paraburkholderia xenovorans (strain LB400).